The chain runs to 89 residues: Signal recognition particle 19 kDa protein (89 aa).

The protein belongs to the SRP19 family. Part of the signal recognition particle protein translocation system, which is composed of SRP and FtsY. Archaeal SRP consists of a 7S RNA molecule of 300 nucleotides and two protein subunits: SRP54 and SRP19.

The protein resides in the cytoplasm. Involved in targeting and insertion of nascent membrane proteins into the cytoplasmic membrane. Binds directly to 7S RNA and mediates binding of the 54 kDa subunit of the SRP. This is Signal recognition particle 19 kDa protein from Methanococcus maripaludis (strain C7 / ATCC BAA-1331).